A 445-amino-acid polypeptide reads, in one-letter code: Phosphoglucosamine mutase (445 aa).

Ser-105 (phosphoserine intermediate) is an active-site residue. Mg(2+) contacts are provided by Ser-105, Asp-244, Asp-246, and Asp-248. Ser-105 carries the phosphoserine modification.

It belongs to the phosphohexose mutase family. Mg(2+) serves as cofactor. Post-translationally, activated by phosphorylation.

It catalyses the reaction alpha-D-glucosamine 1-phosphate = D-glucosamine 6-phosphate. In terms of biological role, catalyzes the conversion of glucosamine-6-phosphate to glucosamine-1-phosphate. This is Phosphoglucosamine mutase from Janthinobacterium sp. (strain Marseille) (Minibacterium massiliensis).